Here is a 164-residue protein sequence, read N- to C-terminus: UPF0304 protein YfbU (164 aa).

This sequence belongs to the UPF0304 family.

This is UPF0304 protein YfbU from Shigella flexneri serotype 5b (strain 8401).